Here is a 320-residue protein sequence, read N- to C-terminus: MQTRNTFSWIREEITRSISVSLMIYIITWASISSAYPIFAQQNYENPREATGRIVCANCHLASKPVDIEVPQAVLPDTVFEAVVKIPYDMQLKQVLANGKKGALNVGAVLILPEGFELAPPDRISPEMKEKIGNLSFQNYRPNKKNILVIGPVPGQKYSEITFPILAPDPATNKDVHFLKYPIYVGGNRGRGQIYPDGSKSNNTVYNATAGGIISKILRKEKGGYEITIVDASNERQVIDIIPRGLELLVSEGESIKLDQPLTSNPNVGGFGQGDAEIVLQDPLRVQGLLFFLGSVVLAQIFLVLKKKQFEKVQLSEMNF.

The first 35 residues, Met-1–Ala-35, serve as a signal peptide directing secretion. Residues Tyr-36, Cys-56, Cys-59, and His-60 each coordinate heme. A helical transmembrane segment spans residues Val-286 to Leu-305.

It belongs to the cytochrome f family. As to quaternary structure, the 4 large subunits of the cytochrome b6-f complex are cytochrome b6, subunit IV (17 kDa polypeptide, petD), cytochrome f and the Rieske protein, while the 4 small subunits are PetG, PetL, PetM and PetN. The complex functions as a dimer. Requires heme as cofactor. In terms of processing, purified from leaves as a water-soluble monomeric protein with a mass of 28.16 kDa, cleavage occurs after Gln-287 and separates the heme-binding from the membrane.

The protein localises to the plastid. It is found in the chloroplast thylakoid membrane. Component of the cytochrome b6-f complex, which mediates electron transfer between photosystem II (PSII) and photosystem I (PSI), cyclic electron flow around PSI, and state transitions. This Brassica rapa subsp. rapa (Turnip) protein is Cytochrome f (petA).